Reading from the N-terminus, the 141-residue chain is Large ribosomal subunit protein uL16 (141 aa).

The interval 1–23 is disordered; it reads MLMPKRTKWRKQQKGRNRGKSFR.

It belongs to the universal ribosomal protein uL16 family. In terms of assembly, part of the 50S ribosomal subunit.

Functionally, binds 23S rRNA and is also seen to make contacts with the A and possibly P site tRNAs. The protein is Large ribosomal subunit protein uL16 of Sulfurovum sp. (strain NBC37-1).